The primary structure comprises 478 residues: 3-isopropylmalate dehydratase large subunit (478 aa).

3 residues coordinate [4Fe-4S] cluster: cysteine 359, cysteine 417, and cysteine 420.

It belongs to the aconitase/IPM isomerase family. LeuC type 1 subfamily. Heterodimer of LeuC and LeuD. It depends on [4Fe-4S] cluster as a cofactor.

It carries out the reaction (2R,3S)-3-isopropylmalate = (2S)-2-isopropylmalate. The protein operates within amino-acid biosynthesis; L-leucine biosynthesis; L-leucine from 3-methyl-2-oxobutanoate: step 2/4. Catalyzes the isomerization between 2-isopropylmalate and 3-isopropylmalate, via the formation of 2-isopropylmaleate. This is 3-isopropylmalate dehydratase large subunit from Anaeromyxobacter sp. (strain Fw109-5).